We begin with the raw amino-acid sequence, 422 residues long: Dihydroorotase (422 aa).

Residues His-53 and His-55 each coordinate Zn(2+). Substrate contacts are provided by residues 55 to 57 (HFR) and Asn-87. Zn(2+)-binding residues include Glu-138, His-172, His-223, and Asp-291. Asp-291 is an active-site residue. Residue His-295 participates in substrate binding.

Belongs to the metallo-dependent hydrolases superfamily. DHOase family. Class I DHOase subfamily. Zn(2+) serves as cofactor.

The enzyme catalyses (S)-dihydroorotate + H2O = N-carbamoyl-L-aspartate + H(+). It participates in pyrimidine metabolism; UMP biosynthesis via de novo pathway; (S)-dihydroorotate from bicarbonate: step 3/3. Its function is as follows. Catalyzes the reversible cyclization of carbamoyl aspartate to dihydroorotate. The polypeptide is Dihydroorotase (Halobacterium salinarum (strain ATCC 700922 / JCM 11081 / NRC-1) (Halobacterium halobium)).